We begin with the raw amino-acid sequence, 152 residues long: Transcriptional repressor NrdR (152 aa).

A zinc finger lies at cysteine 3–cysteine 34. Residues isoleucine 49–lysine 139 enclose the ATP-cone domain.

Belongs to the NrdR family. Requires Zn(2+) as cofactor.

Its function is as follows. Negatively regulates transcription of bacterial ribonucleotide reductase nrd genes and operons by binding to NrdR-boxes. The sequence is that of Transcriptional repressor NrdR from Roseiflexus sp. (strain RS-1).